Consider the following 353-residue polypeptide: Protein-glutamate methylesterase/protein-glutamine glutaminase 4 (353 aa).

Residues 7–124 form the Response regulatory domain; sequence RILVAEDSPT…SPDFDADSRR (118 aa). Asp58 is modified (4-aspartylphosphate). Positions 158 to 350 constitute a CheB-type methylesterase domain; that stretch reads PVSPTRPGVV…SRLTSAFRGS (193 aa). Catalysis depends on residues Ser172, His199, and Asp292.

Belongs to the CheB family. Post-translationally, phosphorylated by CheA. Phosphorylation of the N-terminal regulatory domain activates the methylesterase activity.

It is found in the cytoplasm. The enzyme catalyses [protein]-L-glutamate 5-O-methyl ester + H2O = L-glutamyl-[protein] + methanol + H(+). It carries out the reaction L-glutaminyl-[protein] + H2O = L-glutamyl-[protein] + NH4(+). In terms of biological role, involved in chemotaxis. Part of a chemotaxis signal transduction system that modulates chemotaxis in response to various stimuli. Catalyzes the demethylation of specific methylglutamate residues introduced into the chemoreceptors (methyl-accepting chemotaxis proteins or MCP) by CheR. Also mediates the irreversible deamidation of specific glutamine residues to glutamic acid. The polypeptide is Protein-glutamate methylesterase/protein-glutamine glutaminase 4 (Myxococcus xanthus (strain DK1622)).